We begin with the raw amino-acid sequence, 367 residues long: uncharacterized protein (367 aa).

It localises to the mitochondrion. This is an uncharacterized protein from Paramecium tetraurelia.